Here is a 182-residue protein sequence, read N- to C-terminus: Large ribosomal subunit protein uL6 (182 aa).

It belongs to the universal ribosomal protein uL6 family. Part of the 50S ribosomal subunit.

Its function is as follows. This protein binds to the 23S rRNA, and is important in its secondary structure. It is located near the subunit interface in the base of the L7/L12 stalk, and near the tRNA binding site of the peptidyltransferase center. The chain is Large ribosomal subunit protein uL6 from Dehalococcoides mccartyi (strain ATCC BAA-2100 / JCM 16839 / KCTC 5957 / BAV1).